Consider the following 304-residue polypeptide: Plasmodesmata-located protein 3 (304 aa).

An N-terminal signal peptide occupies residues 1 to 26; it reads MGFYSLKQLLLLYIIIMALFSDLKLA. Over 27-272 the chain is Extracellular; it reads KSSSPEYTNL…SSSSGTTGKT (246 aa). 2 Gnk2-homologous domains span residues 34 to 138 and 143 to 242; these read TNLI…ISGF and GMEL…FYPN. 6 disulfide bridges follow: C41–C116, C92–C101, C104–C129, C151–C220, C196–C205, and C208–C233. The chain crosses the membrane as a helical span at residues 273–293; sequence VAIIVGGTAGVGFLVICLLFV. The segment at 273 to 293 is necessary and sufficient for plasmodesmal targeting; that stretch reads VAIIVGGTAGVGFLVICLLFV. The Cytoplasmic portion of the chain corresponds to 294-304; that stretch reads KNLMKKKYDDY.

This sequence belongs to the cysteine-rich repeat secretory protein family. Plasmodesmata-located proteins (PDLD) subfamily. (Microbial infection) Interacts with Grapevine fanleaf virus (GFLV) 2B-MP. Highly expressed in inflorescence pedacel and shoot apex. Expressed in the outermost L1 layer of the shoot apical meristem and in the epidermis of bulging floral primordia. Within the L1, expression was restricted to the peripheral zone (at protein level).

It localises to the cell membrane. The protein localises to the cell junction. Its subcellular location is the plasmodesma. Its function is as follows. Modulates cell-to-cell trafficking. In Arabidopsis thaliana (Mouse-ear cress), this protein is Plasmodesmata-located protein 3.